Here is a 245-residue protein sequence, read N- to C-terminus: Heavy metal-associated isoprenylated plant protein 1 (245 aa).

The 65-residue stretch at 28–92 (PVHVVLKIDF…KLQKKSKKKV (65 aa)) folds into the HMA 1 domain. A metal cation is bound by residues Cys39 and Cys42. Residues 91–113 (KVELISPKPKKDTKENNEKKAND) form a disordered region. The span at 99–113 (PKKDTKENNEKKAND) shows a compositional bias: basic and acidic residues. An HMA 2 domain is found at 121-188 (VTTVVLKVNC…KLKKTVQVVP (68 aa)). A metal cation-binding residues include Cys132 and Cys135. Cys242 carries the cysteine methyl ester modification. A lipid anchor (S-farnesyl cysteine) is attached at Cys242. A propeptide spans 243 to 245 (SVM) (removed in mature form).

It belongs to the HIPP family.

Its function is as follows. Heavy-metal-binding protein. The sequence is that of Heavy metal-associated isoprenylated plant protein 1 from Arabidopsis thaliana (Mouse-ear cress).